A 527-amino-acid chain; its full sequence is EGF domain-specific O-linked N-acetylglucosamine transferase (527 aa).

The signal sequence occupies residues 1-19; the sequence is MLMLLVFGVLLHEVPLSGQ. The Required for optimal activity motif lies at 295-297; sequence DYD. A glycan (N-linked (GlcNAc...) asparagine) is linked at asparagine 354. A Prevents secretion from ER motif is present at residues 524-527; that stretch reads HDEL.

Belongs to the glycosyltransferase 61 family.

The protein localises to the endoplasmic reticulum lumen. The enzyme catalyses L-seryl-[protein] + UDP-N-acetyl-alpha-D-glucosamine = 3-O-(N-acetyl-beta-D-glucosaminyl)-L-seryl-[protein] + UDP + H(+). It catalyses the reaction L-threonyl-[protein] + UDP-N-acetyl-alpha-D-glucosamine = 3-O-(N-acetyl-beta-D-glucosaminyl)-L-threonyl-[protein] + UDP + H(+). Functionally, catalyzes the transfer of a single N-acetylglucosamine from UDP-GlcNAc to a serine or threonine residue in extracellular proteins resulting in their modification with a beta-linked N-acetylglucosamine (O-GlcNAc). Specifically glycosylates the Thr residue located between the fifth and sixth conserved cysteines of folded EGF-like domains. The polypeptide is EGF domain-specific O-linked N-acetylglucosamine transferase (Eogt) (Rattus norvegicus (Rat)).